The sequence spans 150 residues: UPF0178 protein Bpet3884 (150 aa).

The protein belongs to the UPF0178 family.

The polypeptide is UPF0178 protein Bpet3884 (Bordetella petrii (strain ATCC BAA-461 / DSM 12804 / CCUG 43448)).